Reading from the N-terminus, the 564-residue chain is Iron-sensing transcriptional repressor (564 aa).

The GATA-type 1 zinc-finger motif lies at 12–36 (CSNCHKTTTSLWRRGPDNSLLCNAC). Positions 100–170 (ASKSQSGRKS…SSPPHEPSVT (71 aa)) are disordered. Serine 109 carries the post-translational modification Phosphoserine. Low complexity predominate over residues 109–120 (SLSPNPSSVPSS). Polar residues predominate over residues 135–148 (QIVSDTTTETSNGT). The segment at 172 to 196 (CQNCATTNTPLWRRDESGNPICNAC) adopts a GATA-type 2 zinc-finger fold. Disordered regions lie at residues 226–285 (GNAN…NTGV), 381–409 (DSSK…NPLG), and 443–496 (LLNP…VQGS). 4 stretches are compositionally biased toward polar residues: residues 240 to 253 (SGDS…QSTR), 260 to 271 (SFPNGNGHASGN), 381 to 407 (DSSK…QSNP), and 450 to 486 (PSNS…SPVS).

Interacts with tup11.

The protein resides in the nucleus. With respect to regulation, activated by iron. Transcriptional repressor that binds the consensus promoter sequence 5'-[AT]GATAA-3' during iron-replete conditions to down-regulate transcription of target genes. Represses the expression of the iron transporter fio1 in response to high iron concentrations. Also represses the expression of str1, str2 and str3. Represses the expression of shu1 in presence of iron. The protein is Iron-sensing transcriptional repressor of Schizosaccharomyces pombe (strain 972 / ATCC 24843) (Fission yeast).